Here is a 529-residue protein sequence, read N- to C-terminus: Type I restriction enzyme StySJI methylase subunit (529 aa).

S-adenosyl-L-methionine contacts are provided by residues 148–153, 178–180, and E216; these read QYFTPR and TAG. A disordered region spans residues 405-444; that stretch reads YGEDPHGLSPREEGEWSFNAEESEVADSEENKNTDQHQAT. A compositionally biased stretch (basic and acidic residues) spans 407–418; it reads EDPHGLSPREEG.

The protein belongs to the N(4)/N(6)-methyltransferase family. As to quaternary structure, the type I restriction/modification system is composed of three polypeptides R, M and S; the restriction enzyme has stoichiometry R(2)M(2)S(1) while the methyltransferase is M(2)S(1).

The catalysed reaction is a 2'-deoxyadenosine in DNA + S-adenosyl-L-methionine = an N(6)-methyl-2'-deoxyadenosine in DNA + S-adenosyl-L-homocysteine + H(+). Its function is as follows. The subtype gamma methyltransferase (M) subunit of a type I restriction enzyme. The M and S subunits together form a methyltransferase (MTase) that methylates two adenine residues of the sequence 5'-GAGN(6)GTRC-3'. In the presence of the R subunit the complex can also act as an endonuclease, binding to the same target sequence but cutting the DNA some distance from this site. Whether the DNA is cut or modified depends on the methylation state of the target sequence. When the target site is unmodified, the DNA is cut. When the target site is hemimethylated, the complex acts as a maintenance MTase modifying the DNA so that both strands become methylated. After locating a non-methylated recognition site, the enzyme complex serves as a molecular motor that translocates DNA in an ATP-dependent manner until a collision occurs that triggers cleavage. The polypeptide is Type I restriction enzyme StySJI methylase subunit (Salmonella typhimurium (strain LT2 / SGSC1412 / ATCC 700720)).